The sequence spans 214 residues: Membrane antigen containing repeating peptides (214 aa).

4 tandem repeats follow at residues 1–14 (QETS…EETL), 15–28 (QETS…EETL), 29–42 (QETS…EETL), and 43–56 (QETS…EETL). The segment at 1-31 (QETSAKLADTEETLQETSAKLADTEETLQET) is disordered. The tract at residues 1-56 (QETSAKLADTEETLQETSAKLADTEETLQETSAKLADTEETLQETSAKLADTEETL) is 4 X 14 AA tandem repeats. A disordered region spans residues 180 to 214 (CSLHPTPRRLGDVSNRENSIENKTRSASRLSGRLF). The segment covering 188-203 (RLGDVSNRENSIENKT) has biased composition (basic and acidic residues).

It localises to the membrane. In Leishmania major, this protein is Membrane antigen containing repeating peptides.